Consider the following 593-residue polypeptide: Gamma-humulene synthase (593 aa).

Residues methionine 1–histidine 26 show a composition bias toward polar residues. A disordered region spans residues methionine 1 to arginine 34. Mg(2+) is bound by residues aspartate 343, aspartate 347, aspartate 488, and glutamate 496. The DDXXD motif signature appears at aspartate 343–aspartate 347.

It belongs to the terpene synthase family. Tpsd subfamily. Mg(2+) serves as cofactor. Requires K(+) as cofactor.

Its subcellular location is the cytoplasm. It catalyses the reaction (2E,6E)-farnesyl diphosphate = gamma-humulene + diphosphate. It carries out the reaction (2E,6E)-farnesyl diphosphate = sibirene + diphosphate. The catalysed reaction is (2E,6E)-farnesyl diphosphate = longifolene + diphosphate. The enzyme catalyses (2E,6E)-farnesyl diphosphate = beta-himachalene + diphosphate. It catalyses the reaction (2E,6E)-farnesyl diphosphate = gamma-himachalene + diphosphate. It carries out the reaction (2E,6E)-farnesyl diphosphate = alpha-himachalene + diphosphate. Its pathway is terpene metabolism; oleoresin biosynthesis. Its function is as follows. Involved in defensive oleoresin formation in conifers in response to insect attack or other injury. Involved in 52 sesquiterpene (C15) olefins biosynthesis. The polypeptide is Gamma-humulene synthase (ag5) (Abies grandis (Grand fir)).